Reading from the N-terminus, the 493-residue chain is Ribosomal protein uS12 methylthiotransferase RimO (493 aa).

The 117-residue stretch at 5–121 (RTVALVTLGC…ISDRLQTILN (117 aa)) folds into the MTTase N-terminal domain. [4Fe-4S] cluster contacts are provided by cysteine 14, cysteine 50, and cysteine 84. A disordered region spans residues 153 to 177 (LPGHGPTDLPEGVAPASGPRAPLRR). In terms of domain architecture, Radical SAM core spans 179–410 (LDGSPVASVK…RLAEELVSQR (232 aa)). 3 residues coordinate [4Fe-4S] cluster: cysteine 193, cysteine 197, and cysteine 200. The TRAM domain maps to 412 to 482 (DERVGATVRV…GVDLVAEPLL (71 aa)).

Belongs to the methylthiotransferase family. RimO subfamily. The cofactor is [4Fe-4S] cluster.

Its subcellular location is the cytoplasm. It carries out the reaction L-aspartate(89)-[ribosomal protein uS12]-hydrogen + (sulfur carrier)-SH + AH2 + 2 S-adenosyl-L-methionine = 3-methylsulfanyl-L-aspartate(89)-[ribosomal protein uS12]-hydrogen + (sulfur carrier)-H + 5'-deoxyadenosine + L-methionine + A + S-adenosyl-L-homocysteine + 2 H(+). Functionally, catalyzes the methylthiolation of an aspartic acid residue of ribosomal protein uS12. This chain is Ribosomal protein uS12 methylthiotransferase RimO, found in Streptomyces coelicolor (strain ATCC BAA-471 / A3(2) / M145).